Here is a 77-residue protein sequence, read N- to C-terminus: Teretoxin Tsu15.4 (77 aa).

A signal peptide spans 1-21 (MTKLTVLLLAILVLLPLATSN). Positions 22–40 (SAADEALASLSGLLRRAKR) are excised as a propeptide.

In terms of processing, contains 4 disulfide bonds. In terms of tissue distribution, expressed by the venom duct.

It localises to the secreted. This chain is Teretoxin Tsu15.4, found in Terebra subulata (Chocolate spotted auger).